A 626-amino-acid chain; its full sequence is Hemocyanin AA6 chain (626 aa).

6 residues coordinate Cu cation: His-170, His-174, His-201, His-321, His-325, and His-361. The residue at position 374 (Ser-374) is a Phosphoserine.

It belongs to the tyrosinase family. Hemocyanin subfamily. In terms of assembly, scorpion hemocyanin is a 24-chain polymer with 8 different chains identified, assembled in hexameric substructures. Three disulfide bonds are present. In terms of tissue distribution, hemolymph.

Its subcellular location is the secreted. It localises to the extracellular space. Its function is as follows. Hemocyanins are copper-containing oxygen carriers occurring freely dissolved in the hemolymph of many mollusks and arthropods. This is Hemocyanin AA6 chain from Androctonus australis (Sahara scorpion).